We begin with the raw amino-acid sequence, 101 residues long: Large ribosomal subunit protein eL43 (101 aa).

The C4-type zinc finger occupies cysteine 40–cysteine 62.

It belongs to the eukaryotic ribosomal protein eL43 family. It depends on Zn(2+) as a cofactor.

This is Large ribosomal subunit protein eL43 from Pyrobaculum islandicum (strain DSM 4184 / JCM 9189 / GEO3).